A 196-amino-acid chain; its full sequence is FMN-dependent NADH:quinone oxidoreductase (196 aa).

Ser10 is an FMN binding site.

The protein belongs to the azoreductase type 1 family. As to quaternary structure, homodimer. Requires FMN as cofactor.

The catalysed reaction is 2 a quinone + NADH + H(+) = 2 a 1,4-benzosemiquinone + NAD(+). The enzyme catalyses N,N-dimethyl-1,4-phenylenediamine + anthranilate + 2 NAD(+) = 2-(4-dimethylaminophenyl)diazenylbenzoate + 2 NADH + 2 H(+). Functionally, quinone reductase that provides resistance to thiol-specific stress caused by electrophilic quinones. Its function is as follows. Also exhibits azoreductase activity. Catalyzes the reductive cleavage of the azo bond in aromatic azo compounds to the corresponding amines. In Cereibacter sphaeroides (strain ATCC 17023 / DSM 158 / JCM 6121 / CCUG 31486 / LMG 2827 / NBRC 12203 / NCIMB 8253 / ATH 2.4.1.) (Rhodobacter sphaeroides), this protein is FMN-dependent NADH:quinone oxidoreductase.